Here is a 150-residue protein sequence, read N- to C-terminus: Large ribosomal subunit protein uL22c (150 aa).

This sequence belongs to the universal ribosomal protein uL22 family. In terms of assembly, part of the 50S ribosomal subunit.

It is found in the plastid. Functionally, this protein binds specifically to 23S rRNA. Its function is as follows. The globular domain of the protein is located near the polypeptide exit tunnel on the outside of the subunit, while an extended beta-hairpin is found that lines the wall of the exit tunnel in the center of the 70S ribosome. In Orobanche minor (Small broomrape), this protein is Large ribosomal subunit protein uL22c (rpl22).